Here is a 218-residue protein sequence, read N- to C-terminus: uncharacterized protein (218 aa).

A Response regulatory domain is found at 7 to 123; sequence RVALADDQPL…ELIDAIRAAA (117 aa). Asp-58 carries the post-translational modification 4-aspartylphosphate. Residues 150–215 enclose the HTH luxR-type domain; it reads AEELAEPFTK…QAVVFAIRNG (66 aa). Residues 174–193 constitute a DNA-binding region (H-T-H motif); the sequence is NEDIAEKLFVSESTVKTHVH.

In terms of processing, phosphorylated by YxjM.

It localises to the cytoplasm. In terms of biological role, probable member of the two-component regulatory system YxjM/YxjL. This is an uncharacterized protein from Bacillus subtilis (strain 168).